The primary structure comprises 692 residues: Glycogen phosphorylase (692 aa).

Residue K586 is modified to N6-(pyridoxal phosphate)lysine.

The protein belongs to the glycogen phosphorylase family. Pyridoxal 5'-phosphate is required as a cofactor.

The catalysed reaction is [(1-&gt;4)-alpha-D-glucosyl](n) + phosphate = [(1-&gt;4)-alpha-D-glucosyl](n-1) + alpha-D-glucose 1-phosphate. Phosphorylase is an important allosteric enzyme in carbohydrate metabolism. Enzymes from different sources differ in their regulatory mechanisms and in their natural substrates. However, all known phosphorylases share catalytic and structural properties. In Aquifex aeolicus (strain VF5), this protein is Glycogen phosphorylase (glgP).